Consider the following 367-residue polypeptide: Quinolinate synthase (367 aa).

Iminosuccinate contacts are provided by histidine 45 and serine 62. Cysteine 109 serves as a coordination point for [4Fe-4S] cluster. Iminosuccinate-binding positions include 140–142 and serine 161; that span reads YVN. Cysteine 229 is a binding site for [4Fe-4S] cluster. Residues 255–257 and threonine 272 contribute to the iminosuccinate site; that span reads HPE. Cysteine 319 contributes to the [4Fe-4S] cluster binding site.

This sequence belongs to the quinolinate synthase family. Type 3 subfamily. Requires [4Fe-4S] cluster as cofactor.

Its subcellular location is the cytoplasm. The enzyme catalyses iminosuccinate + dihydroxyacetone phosphate = quinolinate + phosphate + 2 H2O + H(+). Its pathway is cofactor biosynthesis; NAD(+) biosynthesis; quinolinate from iminoaspartate: step 1/1. Functionally, catalyzes the condensation of iminoaspartate with dihydroxyacetone phosphate to form quinolinate. The protein is Quinolinate synthase of Lysinibacillus sphaericus (strain C3-41).